Consider the following 915-residue polypeptide: Scaffold attachment factor B1 (915 aa).

Positions Met-1–Ser-24 are enriched in low complexity. The disordered stretch occupies residues Met-1–Asp-33. Residue Ala-2 is modified to N-acetylalanine. A phosphoserine mark is found at Ser-24 and Ser-55. Residues Leu-31–Ile-65 enclose the SAP domain. Residues Ala-64–Thr-118 are disordered. Over residues Asp-67–Ile-77 the composition is skewed to acidic residues. Phosphoserine is present on Ser-79. Over residues Glu-98 to Thr-118 the composition is skewed to acidic residues. Residues Lys-172 and Lys-186 each participate in a glycyl lysine isopeptide (Lys-Gly) (interchain with G-Cter in SUMO2) cross-link. The residue at position 188 (Thr-188) is a Phosphothreonine. Phosphoserine occurs at positions 195, 197, and 209. Positions Leu-221–Asn-407 are disordered. Positions Cys-225 to Ser-234 are enriched in basic and acidic residues. Lys-231 participates in a covalent cross-link: Glycyl lysine isopeptide (Lys-Gly) (interchain with G-Cter in SUMO). Polar residues predominate over residues Ser-275–Ala-286. A compositionally biased stretch (basic and acidic residues) spans Val-293–Cys-309. Lys-294 participates in a covalent cross-link: Glycyl lysine isopeptide (Lys-Gly) (interchain with G-Cter in SUMO). Residues Glu-319 to Ala-330 are compositionally biased toward low complexity. The span at Glu-346–Phe-359 shows a compositional bias: basic and acidic residues. Over residues Glu-371–Ser-383 the composition is skewed to polar residues. Residue Lys-381 forms a Glycyl lysine isopeptide (Lys-Gly) (interchain with G-Cter in SUMO2) linkage. 2 positions are modified to phosphoserine: Ser-383 and Ser-384. Residues Asp-390–Arg-401 show a composition bias toward basic and acidic residues. A Glycyl lysine isopeptide (Lys-Gly) (interchain with G-Cter in SUMO2) cross-link involves residue Lys-392. Residues Arg-406 to Asn-484 form the RRM domain. Ser-415 is subject to Phosphoserine. Basic and acidic residues-rich tracts occupy residues Ile-477–Arg-551 and Gly-559–Lys-570. Disordered regions lie at residues Ile-477–Glu-641, Arg-671–Pro-708, and Phe-749–Tyr-915. Residues Lys-483, Lys-514, Lys-543, and Lys-570 each participate in a glycyl lysine isopeptide (Lys-Gly) (interchain with G-Cter in SUMO2) cross-link. Positions Gly-528–Arg-792 are interaction with POLR2A. Interaction with SFRS1; SFRS9 and SFRS10. A Glycyl lysine isopeptide (Lys-Gly) (interchain with G-Cter in SUMO1); alternate cross-link involves residue Lys-578. Lys-578 participates in a covalent cross-link: Glycyl lysine isopeptide (Lys-Gly) (interchain with G-Cter in SUMO2); alternate. Residues Ser-580, Ser-582, Ser-601, and Ser-604 each carry the phosphoserine modification. Positions Gly-581–Glu-641 are enriched in basic and acidic residues. The Nuclear localization signal signature appears at Lys-599–Asp-616. Residues Lys-599–Tyr-915 form an interaction with SAFB2 region. Lys-607 carries the post-translational modification N6-acetyllysine. Positions Phe-749–Asp-796 are enriched in basic and acidic residues. At Arg-811 the chain carries Omega-N-methylarginine. Basic and acidic residues-rich tracts occupy residues Pro-817 to Ser-832 and Met-841 to Gly-851. Lys-847 is covalently cross-linked (Glycyl lysine isopeptide (Lys-Gly) (interchain with G-Cter in SUMO2)). Asymmetric dimethylarginine occurs at positions 868, 874, and 884. Gly residues predominate over residues Gly-892 to Ser-901. Residues Arg-905–Tyr-915 are compositionally biased toward basic and acidic residues.

Monomer and homodimer. Forms heterodimers with SAFB2. Interacts with KHDRBS3. Interacts with CLK2. Interacts with POLR2A, SRSF1/ASF, SRSF9/SRp30c and SFSF10/TRA2B. Interacts with isoform 1 and isoform 2 of SRPK1 and inhibits its activity. Interacts with RBMX. Interacts with FUS. Interacts with ZBED4. In terms of processing, sumoylated by PIAS1 with SUMO1 and SUMO2/3, desumoylated by SENP1. Sumoylation is required for transcriptional repressor activity. Ubiquitous. Expressed at high levels in the CNS and at low levels in the liver. Expressed in a wide number of breast cancer cell lines.

The protein localises to the nucleus. Binds to scaffold/matrix attachment region (S/MAR) DNA and forms a molecular assembly point to allow the formation of a 'transcriptosomal' complex (consisting of SR proteins and RNA polymerase II) coupling transcription and RNA processing. Functions as an estrogen receptor corepressor and can also bind to the HSP27 promoter and decrease its transcription. Thereby acts as a negative regulator of cell proliferation. When associated with RBMX, binds to and stimulates transcription from the SREBF1 promoter. This Homo sapiens (Human) protein is Scaffold attachment factor B1 (SAFB).